The primary structure comprises 798 residues: Exo-1,4-beta-xylosidase xlnD (798 aa).

The signal sequence occupies residues 1–20; it reads MPGAASIVAVLAALLPTALG. Asn-23, Asn-87, Asn-142, and Asn-237 each carry an N-linked (GlcNAc...) asparagine glycan. Residue Asp-310 is part of the active site. Asn-326, Asn-391, Asn-404, Asn-443, Asn-480, Asn-522, Asn-618, Asn-645, Asn-658, Asn-685, and Asn-707 each carry an N-linked (GlcNAc...) asparagine glycan.

The protein belongs to the glycosyl hydrolase 3 family.

Its subcellular location is the secreted. The enzyme catalyses Hydrolysis of (1-&gt;4)-beta-D-xylans, to remove successive D-xylose residues from the non-reducing termini.. The protein operates within glycan degradation; xylan degradation. Its function is as follows. Xylan 1,4-beta-xylosidase involved in the hydrolysis of xylan, a major structural heterogeneous polysaccharide found in plant biomass representing the second most abundant polysaccharide in the biosphere, after cellulose. In Aspergillus oryzae (strain ATCC 42149 / RIB 40) (Yellow koji mold), this protein is Exo-1,4-beta-xylosidase xlnD (xlnD).